A 147-amino-acid chain; its full sequence is D-aminoacyl-tRNA deacylase (147 aa).

The Gly-cisPro motif, important for rejection of L-amino acids motif lies at 136–137; the sequence is GP.

It belongs to the DTD family. Homodimer.

The protein resides in the cytoplasm. The enzyme catalyses glycyl-tRNA(Ala) + H2O = tRNA(Ala) + glycine + H(+). It carries out the reaction a D-aminoacyl-tRNA + H2O = a tRNA + a D-alpha-amino acid + H(+). An aminoacyl-tRNA editing enzyme that deacylates mischarged D-aminoacyl-tRNAs. Also deacylates mischarged glycyl-tRNA(Ala), protecting cells against glycine mischarging by AlaRS. Acts via tRNA-based rather than protein-based catalysis; rejects L-amino acids rather than detecting D-amino acids in the active site. By recycling D-aminoacyl-tRNA to D-amino acids and free tRNA molecules, this enzyme counteracts the toxicity associated with the formation of D-aminoacyl-tRNA entities in vivo and helps enforce protein L-homochirality. This chain is D-aminoacyl-tRNA deacylase, found in Streptococcus agalactiae serotype III (strain NEM316).